Here is a 664-residue protein sequence, read N- to C-terminus: Cyclic nucleotide-gated channel alpha-2 (664 aa).

Over residues 1–10 (MMTEKSNGVK) the composition is skewed to polar residues. The interval 1–51 (MMTEKSNGVKSSPANNHNHHPPPSIKANGKDDHRAGSRPQSVAADDDTSPE) is disordered. Topologically, residues 1 to 146 (MMTEKSNGVK…PAGDWYYRWL (146 aa)) are cytoplasmic. The helical transmembrane segment at 147 to 168 (FVIAMPVLYNWCLLVARACFSD) threads the bilayer. Residues 169–178 (LQRNYFVVWL) lie on the Extracellular side of the membrane. Residues 179-199 (VLDYFSDTVYIADLIIRLRTG) form a helical membrane-spanning segment. The Cytoplasmic portion of the chain corresponds to 200 to 224 (FLEQGLLVKDPKKLRDNYIHTLQFK). The chain crosses the membrane as a helical span at residues 225–243 (LDVASIIPTDLIYFAVGIH). Over 244-248 (SPEVR) the chain is Extracellular. Residues 249–267 (FNRLLHFARMFEFFDRTET) form a helical membrane-spanning segment. The Cytoplasmic portion of the chain corresponds to 268–274 (RTSYPNI). The ion conduction pathway stretch occupies residues 272-380 (PNIFRISNLV…GNVGSMISNM (109 aa)). Residues 275–298 (FRISNLVLYILVIIHWNACIYYVI) traverse the membrane as a helical segment. Over 299–321 (SKSIGFGVDTWVYPNITDPEYGY) the chain is Extracellular. The next 2 helical transmembrane spans lie at 322–356 (LARE…LFVI) and 357–381 (FDFL…SNMN). Residues 339–342 (TIGE) form a selectivity filter region. The tract at residues 382–458 (ATRAEFQAKI…STLKKVRIFQ (77 aa)) is C-linker. At 382–664 (ATRAEFQAKI…INTPEPTAAE (283 aa)) the chain is on the cytoplasmic side. Positions 462-582 (AGLLVELVLK…EERGREILMK (121 aa)) are cyclic nucleotide-binding domain. 3',5'-cyclic GMP-binding residues include glycine 522, serine 525, arginine 538, and threonine 539. Arginine 538 and threonine 539 together coordinate 3',5'-cyclic AMP. Residues 599–653 (VQEKLEQLETNMDTLYTRFARLLAEYTGAQQKLKQRITVLETKMKQNHEDDYLSD) are a coiled coil.

It belongs to the cyclic nucleotide-gated cation channel (TC 1.A.1.5) family. CNGA2 subfamily. As to quaternary structure, the olfactory cyclic nucleotide-gated channel is an heterotetramer composed of CNGA2, CNGA4 and CNGB1b subunits with 2:1:1 stoichiometry. As to expression, olfactory neurons. Widely expressed in brain, enriched in deep cerebellar nuclei, olfactory bulb mitral cells and cerebellar Purkinje neurons. Expressed in olfactory sensory cilia (at protein level).

The protein localises to the cell projection. It localises to the cilium membrane. It catalyses the reaction Ca(2+)(in) = Ca(2+)(out). It carries out the reaction Na(+)(in) = Na(+)(out). The catalysed reaction is K(+)(in) = K(+)(out). The enzyme catalyses NH4(+)(in) = NH4(+)(out). It catalyses the reaction Rb(+)(in) = Rb(+)(out). It carries out the reaction Li(+)(in) = Li(+)(out). The catalysed reaction is Cs(+)(in) = Cs(+)(out). Its activity is regulated as follows. The channel activity is inhibited by L-cis diltiazem. Functionally, pore-forming subunit of the olfactory cyclic nucleotide-gated channel. Operates in the cilia of olfactory sensory neurons where chemical stimulation of the odorant is converted to an electrical signal. Mediates odorant-induced cAMP-dependent Ca(2+) influx triggering neuron depolarization. The rise of intracellular Ca(2+) levels potentiates the olfactory response by activating Ca(2+)-dependent Cl(-) channels, but it also serves as a negative feedback signal to desensitize the channel for rapid adaptation to odorants. Conducts cAMP- and cGMP-gated ion currents, with permeability for monovalent and divalent cations. This chain is Cyclic nucleotide-gated channel alpha-2, found in Rattus norvegicus (Rat).